The chain runs to 663 residues: MSSRPPASLPARGPRLLLLSLLLLGTVPGPRPGSAFYLPGLAPVNFCTEEKKSNECKAEIELFVNRLDSVESVLPYEYTAFDFCQASEGKRPSENLGQVLFGERIEPSPYKFTFNKEETCKLVCTKTYHTEKAEDKQKLDFLKKSMLLNYQHHWIVDNMPVTWCYEVEDNQKFCNPGFPIGCYITDKGHAKDACVISSEFHERDTFYIFNHVDIKIQYHVVETGSMGARLVAAKLEPKSFRHTHIDKPDCSGPAMDISNKASGEIKIAYTYSISFEEEKNIRWASRWDYILESMPHTHIQWFSIMNSLVIVLFLSGMVAMIMLRTLHKDIARYNQMDSTEDAQEEFGWKLVHGDIFRPPRKGMLLSVFLGSGTQILIMTFVTLFFACLGFLSPANRGALMTCAVVLWVLLGTPAGYVAARFYKSFGGEKWKTNVLLTSFLCPGIVFADFFIMNLILWGEGSSAAIPFGTLVAILALWFCISVPLTFIGAYFGFKKNAIEHPVRTNQIPRQIPEQSFYTKPLPGIIMGGILPFGCIFIQLFFILNSIWSHQMYYMFGFLFLVFIILVITCSEATILLCYFHLCAEDYHWQWRSFLTSGFTAVYFLVYAIHYFFSKLQITGTASTILYFGYTMIMVLIFFLFTGTIGFFACFWFVTKIYSVVKVD.

The N-terminal stretch at 1–28 (MSSRPPASLPARGPRLLLLSLLLLGTVP) is a signal peptide. Topologically, residues 29–300 (GPRPGSAFYL…LESMPHTHIQ (272 aa)) are lumenal. Residues 301–321 (WFSIMNSLVIVLFLSGMVAMI) traverse the membrane as a helical segment. Topologically, residues 322 to 374 (MLRTLHKDIARYNQMDSTEDAQEEFGWKLVHGDIFRPPRKGMLLSVFLGSGTQ) are cytoplasmic. Residues 375-395 (ILIMTFVTLFFACLGFLSPAN) form a helical membrane-spanning segment. The Lumenal portion of the chain corresponds to 396–398 (RGA). The helical transmembrane segment at 399–419 (LMTCAVVLWVLLGTPAGYVAA) threads the bilayer. Topologically, residues 420–437 (RFYKSFGGEKWKTNVLLT) are cytoplasmic. Residues 438–458 (SFLCPGIVFADFFIMNLILWG) traverse the membrane as a helical segment. Residues 459-466 (EGSSAAIP) are Lumenal-facing. Residues 467–487 (FGTLVAILALWFCISVPLTFI) form a helical membrane-spanning segment. Over 488-522 (GAYFGFKKNAIEHPVRTNQIPRQIPEQSFYTKPLP) the chain is Cytoplasmic. Residues 523-543 (GIIMGGILPFGCIFIQLFFIL) traverse the membrane as a helical segment. At 544 to 554 (NSIWSHQMYYM) the chain is on the lumenal side. The helical transmembrane segment at 555–575 (FGFLFLVFIILVITCSEATIL) threads the bilayer. Residues 576–591 (LCYFHLCAEDYHWQWR) are Cytoplasmic-facing. Residues 592 to 612 (SFLTSGFTAVYFLVYAIHYFF) traverse the membrane as a helical segment. Topologically, residues 613-631 (SKLQITGTASTILYFGYTM) are lumenal. The chain crosses the membrane as a helical span at residues 632–652 (IMVLIFFLFTGTIGFFACFWF). The Cytoplasmic portion of the chain corresponds to 653 to 663 (VTKIYSVVKVD).

It belongs to the nonaspanin (TM9SF) (TC 9.A.2) family.

The protein localises to the endosome membrane. It is found in the golgi outpost. The protein resides in the cytoplasm. It localises to the cytoskeleton. Its subcellular location is the microtubule organizing center. Functionally, in the intracellular compartments, may function as a channel or small molecule transporter. The sequence is that of Transmembrane 9 superfamily member 2 (Tm9sf2) from Rattus norvegicus (Rat).